Reading from the N-terminus, the 470-residue chain is D-serine/D-alanine/glycine transporter (470 aa).

A run of 12 helical transmembrane segments spans residues Leu-30 to Ser-50, Leu-51 to Met-71, Phe-102 to Ile-122, Phe-128 to Val-148, Phe-162 to Met-182, Leu-211 to Val-231, Ile-256 to Val-276, Phe-283 to Val-303, Phe-350 to Gly-370, Ala-371 to Leu-391, Pro-413 to Leu-433, and Gln-441 to Gly-461.

It belongs to the amino acid-polyamine-organocation (APC) superfamily. Amino acid transporter (AAT) (TC 2.A.3.1) family.

Its subcellular location is the cell inner membrane. It catalyses the reaction D-alanine(in) + H(+)(in) = D-alanine(out) + H(+)(out). The enzyme catalyses D-serine(out) + H(+)(out) = D-serine(in) + H(+)(in). It carries out the reaction glycine(in) + H(+)(in) = glycine(out) + H(+)(out). The catalysed reaction is D-cycloserine(in) + H(+)(in) = D-cycloserine(out) + H(+)(out). With respect to regulation, uptake of D-serine is inhibited by D-alanine, D-cycloserine, glycine and at high concentrations of D-threonine. Its function is as follows. Permease that is involved in the transport across the cytoplasmic membrane of D-alanine, D-serine and glycine. Is the only transporter of D-alanine. Transports D-serine less efficiently than DsdX. In addition, in minimal media, transports the broad spectrum antibiotic D-cycloserine into the cell. Transports D-cycloserine only in minimal media, and not in a complex medium, suggesting that CycA does not play a role in D-cycloserine transport when E.coli is grown in a complex or biologically relevant medium, probably due to competition from other CycA substrates present in the medium. This is D-serine/D-alanine/glycine transporter (cycA) from Escherichia coli O6:H1 (strain CFT073 / ATCC 700928 / UPEC).